The primary structure comprises 488 residues: ATP synthase subunit beta (488 aa).

164 to 171 (GGAGVGKT) contributes to the ATP binding site.

It belongs to the ATPase alpha/beta chains family. F-type ATPases have 2 components, CF(1) - the catalytic core - and CF(0) - the membrane proton channel. CF(1) has five subunits: alpha(3), beta(3), gamma(1), delta(1), epsilon(1). CF(0) has four main subunits: a(1), b(1), b'(1) and c(9-12).

It is found in the cellular thylakoid membrane. It carries out the reaction ATP + H2O + 4 H(+)(in) = ADP + phosphate + 5 H(+)(out). Functionally, produces ATP from ADP in the presence of a proton gradient across the membrane. The catalytic sites are hosted primarily by the beta subunits. This chain is ATP synthase subunit beta, found in Prochlorococcus marinus (strain NATL2A).